A 474-amino-acid chain; its full sequence is Neuronal acetylcholine receptor subunit eat-2 (474 aa).

The signal sequence occupies residues Met-1–Ser-21. The Extracellular portion of the chain corresponds to Ser-22–Tyr-237. Residue Asn-95 is glycosylated (N-linked (GlcNAc...) asparagine). Cys-149 and Cys-163 are joined by a disulfide. Transmembrane regions (helical) follow at residues Gly-238–Met-258, Ile-266–Val-286, and Leu-303–Phe-323. Residues Arg-324–Arg-440 are Cytoplasmic-facing. A disordered region spans residues Pro-359–Leu-378. The chain crosses the membrane as a helical span at residues Leu-441–Cys-461.

The protein belongs to the ligand-gated ion channel (TC 1.A.9) family. Acetylcholine receptor (TC 1.A.9.1) subfamily. Neuronal AChR seems to be composed of two different type of subunits: alpha and beta. As to expression, expressed in pharyngeal muscle.

The protein resides in the postsynaptic cell membrane. It localises to the cell membrane. Its function is as follows. After binding acetylcholine, the AChR responds by an extensive change in conformation that affects all subunits and leads to opening of an ion-conducting channel across the plasma membrane. Nicotinic acetylcholine receptor in the MC pharyngeal motor neuron involved in pharyngeal pumping. Has a role in the determination of life span possibly via calorific restriction which affects growth rate, although this is independent of metabolic activity. Plays a role in the defense against the accumulation of ingested live pathogenic bacteria in the intestine. The polypeptide is Neuronal acetylcholine receptor subunit eat-2 (Caenorhabditis elegans).